Reading from the N-terminus, the 869-residue chain is DNA mismatch repair protein MutS (869 aa).

ATP is bound at residue 624–631; the sequence is GPNMGGKS.

It belongs to the DNA mismatch repair MutS family.

In terms of biological role, this protein is involved in the repair of mismatches in DNA. It is possible that it carries out the mismatch recognition step. This protein has a weak ATPase activity. The polypeptide is DNA mismatch repair protein MutS (Solibacter usitatus (strain Ellin6076)).